The chain runs to 246 residues: tRNA pseudouridine synthase A (246 aa).

Catalysis depends on Asp-52, which acts as the Nucleophile. Tyr-111 contributes to the substrate binding site.

The protein belongs to the tRNA pseudouridine synthase TruA family. Homodimer.

The catalysed reaction is uridine(38/39/40) in tRNA = pseudouridine(38/39/40) in tRNA. Functionally, formation of pseudouridine at positions 38, 39 and 40 in the anticodon stem and loop of transfer RNAs. The chain is tRNA pseudouridine synthase A from Fervidobacterium nodosum (strain ATCC 35602 / DSM 5306 / Rt17-B1).